A 234-amino-acid chain; its full sequence is Large ribosomal subunit protein uL1 (234 aa).

This sequence belongs to the universal ribosomal protein uL1 family. In terms of assembly, part of the 50S ribosomal subunit.

Its function is as follows. Binds directly to 23S rRNA. The L1 stalk is quite mobile in the ribosome, and is involved in E site tRNA release. In terms of biological role, protein L1 is also a translational repressor protein, it controls the translation of the L11 operon by binding to its mRNA. The chain is Large ribosomal subunit protein uL1 from Yersinia enterocolitica serotype O:8 / biotype 1B (strain NCTC 13174 / 8081).